The primary structure comprises 294 residues: Elongation factor Ts (294 aa).

Residues threonine 78–valine 81 form an involved in Mg(2+) ion dislocation from EF-Tu region.

The protein belongs to the EF-Ts family.

It is found in the cytoplasm. Associates with the EF-Tu.GDP complex and induces the exchange of GDP to GTP. It remains bound to the aminoacyl-tRNA.EF-Tu.GTP complex up to the GTP hydrolysis stage on the ribosome. The sequence is that of Elongation factor Ts from Mycoplasma mobile (strain ATCC 43663 / 163K / NCTC 11711) (Mesomycoplasma mobile).